We begin with the raw amino-acid sequence, 277 residues long: RsbT co-antagonist protein RsbRB (277 aa).

The region spanning 165–276 (SSPVITLSKS…TNLAQALNYH (112 aa)) is the STAS domain. The residue at position 186 (T186) is a Phosphothreonine.

As to quaternary structure, interacts with RsbRA and RsbS in the stressosome. The stressosome probably also contains RsbRC and RsbRD. In terms of processing, phosphorylated by RsbT.

One of 4 functionally non-identical RsbR paralogs, it functions in the environmental signaling branch of the general stress response. Functionally, negative regulator of sigma-B activity. Non-phosphorylated RsbS binds to RsbT, preventing its association with RsbU. Requires any one of RsbRA, RsbRB, RsbRC or RsbRD to sequester RsbT. When RsbS and the RsbR paralog(s) are phosphorylated, they release RsbT, which can then bind and activate RsbU. This chain is RsbT co-antagonist protein RsbRB (rsbRB), found in Bacillus subtilis (strain 168).